The following is a 232-amino-acid chain: Cytidylate kinase (232 aa).

11–19 provides a ligand contact to ATP; it reads GPAGAGKST.

This sequence belongs to the cytidylate kinase family. Type 1 subfamily.

It is found in the cytoplasm. The enzyme catalyses CMP + ATP = CDP + ADP. It catalyses the reaction dCMP + ATP = dCDP + ADP. The protein is Cytidylate kinase of Desulfitobacterium hafniense (strain Y51).